We begin with the raw amino-acid sequence, 554 residues long: L-ascorbate oxidase homolog (554 aa).

The first 21 residues, 1-21, serve as a signal peptide directing secretion; that stretch reads MGSGKVTFVALLLCLSVGVIA. 2 Plastocyanin-like domains span residues 22–143 and 196–296; these read EDPY…LNVH and SAKV…AIIR. Asn-31, Asn-59, and Asn-108 each carry an N-linked (GlcNAc...) asparagine glycan. The cysteines at positions 101 and 540 are disulfide-linked. N-linked (GlcNAc...) asparagine glycosylation is found at Asn-332, Asn-352, and Asn-423. Positions 411 to 521 constitute a Plastocyanin-like 3 domain; the sequence is DPSKLTIATN…LGEQLYFSVL (111 aa).

Belongs to the multicopper oxidase family. As to expression, pollen.

The protein resides in the secreted. It localises to the extracellular space. Probable oxidoreductase that may be involved in pollen tube growth. The chain is L-ascorbate oxidase homolog from Nicotiana tabacum (Common tobacco).